Consider the following 124-residue polypeptide: uncharacterized protein (124 aa).

The signal sequence occupies residues 1 to 19; sequence MRLLVQKVILIYLARYAKS. 2 helical membrane-spanning segments follow: residues 37–57 and 86–108; these read IAEFLWVYVGSALAYVVGVKF and LGALALITIARAFCVAHINIIII.

The protein localises to the membrane. This is an uncharacterized protein from Saccharomyces cerevisiae (strain ATCC 204508 / S288c) (Baker's yeast).